Reading from the N-terminus, the 779-residue chain is LPS-assembly protein LptD (779 aa).

The N-terminal stretch at 1 to 23 is a signal peptide; the sequence is MKIRYSVLSTFIISALYSQDTQA.

Belongs to the LptD family. In terms of assembly, component of the lipopolysaccharide transport and assembly complex. Interacts with LptE and LptA.

It is found in the cell outer membrane. In terms of biological role, together with LptE, is involved in the assembly of lipopolysaccharide (LPS) at the surface of the outer membrane. This Haemophilus ducreyi (strain 35000HP / ATCC 700724) protein is LPS-assembly protein LptD.